Reading from the N-terminus, the 299-residue chain is Zinc finger protein 414 (299 aa).

2 stretches are compositionally biased toward polar residues: residues 1–20 and 69–81; these read MEEP…SSSG and DSCQ…TGVG. The disordered stretch occupies residues 1–98; that stretch reads MEEPSRPSSD…PRRRPPPGKQ (98 aa). C2H2-type zinc fingers lie at residues 99–123 and 135–159; these read IPCS…LRTH and FRCS…GKLH. Residues 166-190 form a C2H2-type 3; degenerate zinc finger; the sequence is FKCENCLLRFRTHRSLFKHLHVCID. Disordered regions lie at residues 193 to 228 and 254 to 299; these read QNPA…PFPL and PRLR…GACR. Over residues 203–215 the composition is skewed to basic and acidic residues; that stretch reads LDKEPPVPERPPE. Low complexity predominate over residues 217–228; that stretch reads DPSSSLGLPFPL.

The protein belongs to the krueppel C2H2-type zinc-finger protein family.

The protein resides in the nucleus. In terms of biological role, may be involved in transcriptional regulation. The protein is Zinc finger protein 414 (Znf414) of Mus musculus (Mouse).